Reading from the N-terminus, the 957-residue chain is Glycine dehydrogenase (decarboxylating) (957 aa).

Position 708 is an N6-(pyridoxal phosphate)lysine (K708).

Belongs to the GcvP family. The glycine cleavage system is composed of four proteins: P, T, L and H. It depends on pyridoxal 5'-phosphate as a cofactor.

The enzyme catalyses N(6)-[(R)-lipoyl]-L-lysyl-[glycine-cleavage complex H protein] + glycine + H(+) = N(6)-[(R)-S(8)-aminomethyldihydrolipoyl]-L-lysyl-[glycine-cleavage complex H protein] + CO2. The glycine cleavage system catalyzes the degradation of glycine. The P protein binds the alpha-amino group of glycine through its pyridoxal phosphate cofactor; CO(2) is released and the remaining methylamine moiety is then transferred to the lipoamide cofactor of the H protein. In Shigella boydii serotype 4 (strain Sb227), this protein is Glycine dehydrogenase (decarboxylating).